The primary structure comprises 272 residues: Troponin T, fast skeletal muscle (272 aa).

Residues 1–50 (MSDEETEQVEEQYEEEEEAQEEEVQEEAPEPEEVQEDAVAEEEREEDEEE) are compositionally biased toward acidic residues. The interval 1–75 (MSDEETEQVE…EKVDFDDIQK (75 aa)) is disordered. Position 2 is an N-acetylserine (serine 2). Residue serine 2 is modified to Phosphoserine. A compositionally biased stretch (basic and acidic residues) spans 63–75 (PEGEKVDFDDIQK). Phosphoserine is present on serine 91. The span at 114 to 156 (RAERAEQQRIRAEKEREPQNRLAEEKARREEEDAKRRAEDDMK) shows a compositional bias: basic and acidic residues. The tract at residues 114-193 (RAERAEQQRI…TAREMKKKIL (80 aa)) is disordered. Phosphoserine is present on residues serine 162, serine 169, and serine 170. Residues 184–193 (TAREMKKKIL) show a composition bias toward basic and acidic residues. Phosphoserine is present on serine 206. A Phosphotyrosine modification is found at tyrosine 222. The tract at residues 248–272 (RIDQAQKHSKKAGATAKGKVGGRWK) is disordered.

The protein belongs to the troponin T family. In terms of tissue distribution, expressed predominantly in skeletal muscle.

In terms of biological role, troponin T is the tropomyosin-binding subunit of troponin, the thin filament regulatory complex which confers calcium-sensitivity to striated muscle actomyosin ATPase activity. The chain is Troponin T, fast skeletal muscle (Tnnt3) from Mus musculus (Mouse).